Reading from the N-terminus, the 505-residue chain is Activin receptor type-1B (505 aa).

Positions methionine 1–glycine 23 are cleaved as a signal peptide. The Extracellular portion of the chain corresponds to serine 24–glutamate 126. The N-linked (GlcNAc...) asparagine glycan is linked to asparagine 43. Residues leucine 127–isoleucine 149 traverse the membrane as a helical segment. At asparagine 150–isoleucine 505 the chain is on the cytoplasmic side. In terms of domain architecture, GS spans lysine 177 to threonine 206. Residues isoleucine 207–leucine 497 enclose the Protein kinase domain. Residues isoleucine 213 to valine 221 and lysine 234 contribute to the ATP site. Aspartate 335 serves as the catalytic Proton acceptor. Phosphotyrosine is present on tyrosine 380.

This sequence belongs to the protein kinase superfamily. TKL Ser/Thr protein kinase family. TGFB receptor subfamily. In terms of assembly, forms an activin receptor complex with activin receptor type-2 (ACVR2A or ACVR2B). Part of a complex consisting of MAGI2/ARIP1, ACVR2A, ACVR1B and SMAD3. Interacts with SMAD2 and SMAD3. Interacts with SMAD7. Interacts with FKBP1A. Interacts with IGSF1. Interacts with CRIPTO. Interacts with TDP2. Interacts with TSC22D1/TSC-22. It depends on Mg(2+) as a cofactor. The cofactor is Mn(2+). Post-translationally, autophosphorylated. Phosphorylated by activin receptor type-2 (ACVR2A or ACVR2B) in response to activin-binding at serine and threonine residues in the GS domain. Phosphorylation of ACVR1B by activin receptor type-2 regulates association with SMAD7. In terms of processing, ubiquitinated. Level of ubiquitination is regulated by the SMAD7-SMURF1 complex. Ubiquitinated. As to expression, expressed in many tissues, most strongly in kidney, pancreas, brain, lung, and liver.

It is found in the cell membrane. The enzyme catalyses L-threonyl-[receptor-protein] + ATP = O-phospho-L-threonyl-[receptor-protein] + ADP + H(+). It carries out the reaction L-seryl-[receptor-protein] + ATP = O-phospho-L-seryl-[receptor-protein] + ADP + H(+). Its activity is regulated as follows. Activin receptor type-2 (ACVR2A or ACVR2B) activates the type-1 receptor through phosphorylation of its regulatory GS domain. Functionally, transmembrane serine/threonine kinase activin type-1 receptor forming an activin receptor complex with activin receptor type-2 (ACVR2A or ACVR2B). Transduces the activin signal from the cell surface to the cytoplasm and is thus regulating a many physiological and pathological processes including neuronal differentiation and neuronal survival, hair follicle development and cycling, FSH production by the pituitary gland, wound healing, extracellular matrix production, immunosuppression and carcinogenesis. Activin is also thought to have a paracrine or autocrine role in follicular development in the ovary. Within the receptor complex, type-2 receptors (ACVR2A and/or ACVR2B) act as a primary activin receptors whereas the type-1 receptors like ACVR1B act as downstream transducers of activin signals. Activin binds to type-2 receptor at the plasma membrane and activates its serine-threonine kinase. The activated receptor type-2 then phosphorylates and activates the type-1 receptor such as ACVR1B. Once activated, the type-1 receptor binds and phosphorylates the SMAD proteins SMAD2 and SMAD3, on serine residues of the C-terminal tail. Soon after their association with the activin receptor and subsequent phosphorylation, SMAD2 and SMAD3 are released into the cytoplasm where they interact with the common partner SMAD4. This SMAD complex translocates into the nucleus where it mediates activin-induced transcription. Inhibitory SMAD7, which is recruited to ACVR1B through FKBP1A, can prevent the association of SMAD2 and SMAD3 with the activin receptor complex, thereby blocking the activin signal. Activin signal transduction is also antagonized by the binding to the receptor of inhibin-B via the IGSF1 inhibin coreceptor. ACVR1B also phosphorylates TDP2. The protein is Activin receptor type-1B (ACVR1B) of Homo sapiens (Human).